Here is a 597-residue protein sequence, read N- to C-terminus: Elongation factor 4 (597 aa).

The tr-type G domain maps to 2 to 184 (NNIRNFSIIA…ALIAKVPPPK (183 aa)). GTP is bound by residues 14-19 (DHGKST) and 131-134 (NKID).

Belongs to the TRAFAC class translation factor GTPase superfamily. Classic translation factor GTPase family. LepA subfamily.

The protein resides in the cell inner membrane. It catalyses the reaction GTP + H2O = GDP + phosphate + H(+). Functionally, required for accurate and efficient protein synthesis under certain stress conditions. May act as a fidelity factor of the translation reaction, by catalyzing a one-codon backward translocation of tRNAs on improperly translocated ribosomes. Back-translocation proceeds from a post-translocation (POST) complex to a pre-translocation (PRE) complex, thus giving elongation factor G a second chance to translocate the tRNAs correctly. Binds to ribosomes in a GTP-dependent manner. This Herminiimonas arsenicoxydans protein is Elongation factor 4.